Reading from the N-terminus, the 238-residue chain is Cysteine-rich venom protein (238 aa).

Positions 1 to 19 are cleaved as a signal peptide; sequence MIAFIVLLSLAAVLQQSSG. The region spanning 38 to 164 is the SCP domain; the sequence is VDKHNALRRS…STKYLYVCQY (127 aa). Disulfide bonds link cysteine 75-cysteine 153, cysteine 92-cysteine 165, cysteine 148-cysteine 162, cysteine 184-cysteine 191, cysteine 187-cysteine 196, cysteine 200-cysteine 233, cysteine 209-cysteine 227, and cysteine 218-cysteine 231. The region spanning 200 to 233 is the ShKT domain; it reads CKYEDAFTNCKALAKKTKCKTEWIKSKCPATCFC.

This sequence belongs to the CRISP family. In terms of tissue distribution, expressed by the venom gland.

It localises to the secreted. In terms of biological role, blocks contraction of smooth muscle elicited by high potassium-induced depolarization, but does not block caffeine-stimulated contraction. May target voltage-gated calcium channels on smooth muscle. This is Cysteine-rich venom protein from Austrelaps superbus (Lowland copperhead snake).